Here is a 232-residue protein sequence, read N- to C-terminus: MSATSTIVMPGERIAAIEELAKSKRVILGPGLRRLDDTVVASKAGPLRHKEPGTFWVDNYQRRYIPARGDLILGIVRAKAGDLYRVDIGATDTASISYLAFEAASKKNRPDLIPGDLIYARVLNASADIEPELVCVNSVGKSGKLGVLTDGFFFKCSLNLGRMLLRENCPVLAALTRELPYEIAVGVNGRIWLKAHSLKETVALANAISALEQSGCAEIDKICGNLGDFLQA.

It belongs to the RRP40 family. As to quaternary structure, component of the RNA exosome complex. Specifically part of the catalytically inactive RNA exosome core complex.

The protein resides in the cytoplasm. The protein localises to the nucleus. It localises to the nucleolus. In terms of biological role, non-catalytic component of the RNA exosome complex which has 3'-&gt;5' exoribonuclease activity and participates in a multitude of cellular RNA processing and degradation events. In the nucleus, the RNA exosome complex is involved in proper maturation of stable RNA species such as rRNA, snRNA and snoRNA, in the elimination of RNA processing by-products and non-coding 'pervasive' transcripts such as antisense RNA species, and of mRNAs with processing defects, thereby limiting or excluding their export to the cytoplasm. In the cytoplasm, the RNA exosome complex is involved in general mRNA turnover and specifically degrades inherently unstable mRNAs containing AU-rich elements (AREs) within their 3' untranslated regions, and in RNA surveillance pathways, preventing translation of aberrant mRNAs. The catalytic inactive RNA exosome core complex of 9 subunits is proposed to play a pivotal role in the binding and presentation of RNA for ribonucleolysis, and to serve as a scaffold for the association with catalytic subunits and accessory proteins or complexes. Required generally for normal embryonic and neuronal development. Also plays a critical role in the maintenance of neuronal function in mature flies by controlling the levels of specific mRNAs such as the synaptic regulator Arc1. In Drosophila melanogaster (Fruit fly), this protein is Exosome complex component RRP40.